Here is a 447-residue protein sequence, read N- to C-terminus: Rab GDP dissociation inhibitor alpha (447 aa).

Ser427 is subject to Phosphoserine.

This sequence belongs to the Rab GDI family. In terms of assembly, interacts with RHOH. Interacts with the non-phosphorylated forms of RAB1A, RAB3A, RAB5A, RAB5B, RAB5C, RAB8A, RAB8B, RAB10, RAB12, RAB35, and RAB43. In terms of tissue distribution, high expression in brain, lower in other tissues.

The protein resides in the cytoplasm. It localises to the golgi apparatus. The protein localises to the trans-Golgi network. Functionally, regulates the GDP/GTP exchange reaction of most Rab proteins by inhibiting the dissociation of GDP from them, and the subsequent binding of GTP to them. Promotes the dissociation of GDP-bound Rab proteins from the membrane and inhibits their activation. Promotes the dissociation of RAB1A, RAB3A, RAB5A and RAB10 from membranes. The polypeptide is Rab GDP dissociation inhibitor alpha (Gdi1) (Rattus norvegicus (Rat)).